Consider the following 366-residue polypeptide: Aminomethyltransferase (366 aa).

Belongs to the GcvT family. As to quaternary structure, the glycine cleavage system is composed of four proteins: P, T, L and H.

It catalyses the reaction N(6)-[(R)-S(8)-aminomethyldihydrolipoyl]-L-lysyl-[protein] + (6S)-5,6,7,8-tetrahydrofolate = N(6)-[(R)-dihydrolipoyl]-L-lysyl-[protein] + (6R)-5,10-methylene-5,6,7,8-tetrahydrofolate + NH4(+). In terms of biological role, the glycine cleavage system catalyzes the degradation of glycine. The polypeptide is Aminomethyltransferase (Bacillus mycoides (strain KBAB4) (Bacillus weihenstephanensis)).